We begin with the raw amino-acid sequence, 67 residues long: Conotoxin ArMLCL-012 (67 aa).

The first 19 residues, 1 to 19 (MLCLPVFIILLLLASPAAS), serve as a signal peptide directing secretion. A propeptide spanning residues 20–45 (NPLEKRIQSDLIRAALEDADTKNDPR) is cleaved from the precursor. At Cys64 the chain carries Cysteine amide.

Belongs to the conotoxin T superfamily. Contains 2 disulfide bonds that can be either 'C1-C3, C2-C4' or 'C1-C4, C2-C3', since these disulfide connectivities have been observed for conotoxins with cysteine framework V (for examples, see AC P0DQQ7 and AC P81755). As to expression, expressed by the venom duct.

It is found in the secreted. In Conus arenatus (Sand-dusted cone), this protein is Conotoxin ArMLCL-012.